We begin with the raw amino-acid sequence, 458 residues long: Zinc finger protein 239 (458 aa).

Lys108 participates in a covalent cross-link: Glycyl lysine isopeptide (Lys-Gly) (interchain with G-Cter in SUMO2). Ser191 is modified (phosphoserine). 9 consecutive C2H2-type zinc fingers follow at residues 207–229, 235–257, 263–285, 291–313, 319–341, 347–369, 375–397, 403–425, and 431–453; these read YECSQCGKNFSQSSELLLHQRDH, YKCEQCGKGFTRSSSLLIHQAVH, YKCDKCGKGFTRSSSLLIHHAVH, YKCDKCGKGFSQSSKLHIHQRVH, YECEECGMSFSQRSNLHIHQRVH, YKCGECGKGFSQSSNLHIHRCIH, YQCYECGKGFSQSSDLRIHLRVH, YHCGKCGKGFSQSSKLLIHQRVH, and YECSKCGKGFSQSSNLHIHQRVH.

Belongs to the krueppel C2H2-type zinc-finger protein family.

It is found in the nucleus. Functionally, may be involved in transcriptional regulation. The sequence is that of Zinc finger protein 239 (ZNF239) from Homo sapiens (Human).